The primary structure comprises 358 residues: Alpha-2-HS-glycoprotein (358 aa).

An N-terminal signal peptide occupies residues 1 to 18; that stretch reads MKFFVLFLCLVQLWGCHS. The Cystatin fetuin-A-type 1 domain maps to 27–133; that stretch reads ERNPACDDPE…QFSVVFAKCE (107 aa). Disulfide bonds link cysteine 32/cysteine 349, cysteine 89/cysteine 100, cysteine 114/cysteine 132, cysteine 146/cysteine 149, cysteine 208/cysteine 218, and cysteine 229/cysteine 246. Asparagine 99 carries N-linked (GlcNAc...) asparagine glycosylation. Residue serine 134 is modified to Phosphoserine. Threonine 135 carries the phosphothreonine modification. Serine 138 is modified (phosphoserine). The region spanning 144-254 is the Cystatin fetuin-A-type 2 domain; it reads KVCPQCPLLT…TCTVFPTQPV (111 aa). 2 N-linked (GlcNAc...) asparagine glycosylation sites follow: asparagine 156 and asparagine 176. The disordered stretch occupies residues 257 to 288; sequence LPQPDAASSANPPPAADPAVSPPSSPSVPVDS. Residues 267–282 show a composition bias toward pro residues; it reads NPPPAADPAVSPPSSP. 2 positions are modified to phosphoserine: serine 318 and serine 320. A disordered region spans residues 320 to 350; sequence SGEAFGPRQKPKVTHPGVASGVGPVPPPPCP.

The protein belongs to the fetuin family. Phosphorylated by FAM20C in the extracellular medium. Bone marrow.

The protein localises to the secreted. The sequence is that of Alpha-2-HS-glycoprotein (AHSG) from Cavia porcellus (Guinea pig).